Here is a 79-residue protein sequence, read N- to C-terminus: Hematopoietic cell signal transducer (79 aa).

A signal peptide spans 1-18 (MAPPGHLLFLFLLPVAAS). The Extracellular segment spans residues 19–35 (QTNEGSCSGCGPLSLPL). The helical transmembrane segment at 36–56 (LAGLVAADAVMSLLIVGVVFV) threads the bilayer. Residues 57-79 (CMRLHSRPAQEDGRVYINMPGRG) are Cytoplasmic-facing. A Phosphotyrosine modification is found at Tyr72. The interval 72 to 74 (YIN) is GRB2 binding site. A PIK3R1 binding site region spans residues 72–75 (YINM).

The protein belongs to the DAP10 family. In terms of assembly, homodimer; Disulfide-linked. Heterohexamer composed of four subunits of HCST/DAP10 and two subunits of KLRK1. Interacts (via transmembrane domain) with KLRK1 (via transmembrane domain); the interaction is required for KLRK1 NK cell surface and induces NK cell-mediated cytotoxicity. Interacts with PIK3R1 and GRB2. Interacts with CLEC5A. Forms an CLEC5A/TYROBP/HCST trimolecular complex depending almost solely on TYROBP. Interacts with CD300H. In terms of processing, phosphorylated; PIK3R1 and GRB2 associate specifically with tyrosine-phosphorylated HCST. Post-translationally, O-glycosylated.

Its subcellular location is the membrane. Functionally, transmembrane adapter protein which associates with KLRK1 to form an activation receptor KLRK1-HCST in lymphoid and myeloid cells; this receptor plays a major role in triggering cytotoxicity against target cells expressing cell surface ligands such as MHC class I chain-related MICA and MICB, and UL16-binding proteins (ULBPs); these ligands are up-regulated by stress conditions and pathological state such as viral infection and tumor transformation. Functions as a docking site for PI3-kinase PIK3R1 and GRB2. Interaction of ULBPs with KLRK1-HCST triggers calcium mobilization and activation of the PIK3R1, MAP2K/ERK, and JAK2/STAT5 signaling pathways. Both PIK3R1 and GRB2 are required for full KLRK1-HCST-mediated activation and ultimate killing of target cells. In NK cells, KLRK1-HCST signaling directly induces cytotoxicity and enhances cytokine production initiated via DAP12/TYROBP-associated receptors. In T-cells, it provides primarily costimulation for TCR-induced signals. KLRK1-HCST receptor plays a role in immune surveillance against tumors and is required for cytolysis of tumors cells; indeed, melanoma cells that do not express KLRK1 ligands escape from immune surveillance mediated by NK cells. This chain is Hematopoietic cell signal transducer (Hcst), found in Rattus norvegicus (Rat).